The following is a 79-amino-acid chain: CDC42 small effector protein 1 (79 aa).

2 S-palmitoyl cysteine lipidation sites follow: Cys10 and Cys11. Positions 30–43 (IGEPMNFVHLTHIG) constitute a CRIB domain. A disordered region spans residues 48-79 (GAGDGLAMTGAVQEQMRSKGNRDRPWSNSRGL). A compositionally biased stretch (basic and acidic residues) spans 63-72 (MRSKGNRDRP).

The protein belongs to the CDC42SE/SPEC family. As to quaternary structure, interacts with CDC42 (in GTP-bound form). Interacts weakly with RAC1 and not at all with RHOA.

The protein resides in the cytoplasm. It localises to the cytoskeleton. Its subcellular location is the cell membrane. Probably involved in the organization of the actin cytoskeleton by acting downstream of CDC42, inducing actin filament assembly. Alters CDC42-induced cell shape changes. In activated T-cells, may play a role in CDC42-mediated F-actin accumulation at the immunological synapse. May play a role in early contractile events in phagocytosis in macrophages. The protein is CDC42 small effector protein 1 (CDC42SE1) of Pongo abelii (Sumatran orangutan).